The following is a 58-amino-acid chain: Large ribosomal subunit protein bL32 (58 aa).

This sequence belongs to the bacterial ribosomal protein bL32 family.

The chain is Large ribosomal subunit protein bL32 from Anaplasma marginale (strain Florida).